We begin with the raw amino-acid sequence, 484 residues long: UDP-N-acetylmuramoyl-L-alanyl-D-glutamate--2,6-diaminopimelate ligase (484 aa).

UDP-N-acetyl-alpha-D-muramoyl-L-alanyl-D-glutamate is bound at residue Ser-30. 111–117 (GTNGKTT) is an ATP binding site. Residues 153–154 (TT), Ser-180, Gln-186, and Arg-188 each bind UDP-N-acetyl-alpha-D-muramoyl-L-alanyl-D-glutamate. Lys-220 carries the N6-carboxylysine modification. Residues Arg-378, 402–405 (DNPR), Gly-455, and Glu-459 contribute to the meso-2,6-diaminopimelate site. A Meso-diaminopimelate recognition motif motif is present at residues 402-405 (DNPR).

This sequence belongs to the MurCDEF family. MurE subfamily. It depends on Mg(2+) as a cofactor. Post-translationally, carboxylation is probably crucial for Mg(2+) binding and, consequently, for the gamma-phosphate positioning of ATP.

The protein localises to the cytoplasm. It carries out the reaction UDP-N-acetyl-alpha-D-muramoyl-L-alanyl-D-glutamate + meso-2,6-diaminopimelate + ATP = UDP-N-acetyl-alpha-D-muramoyl-L-alanyl-gamma-D-glutamyl-meso-2,6-diaminopimelate + ADP + phosphate + H(+). It participates in cell wall biogenesis; peptidoglycan biosynthesis. Its function is as follows. Catalyzes the addition of meso-diaminopimelic acid to the nucleotide precursor UDP-N-acetylmuramoyl-L-alanyl-D-glutamate (UMAG) in the biosynthesis of bacterial cell-wall peptidoglycan. This is UDP-N-acetylmuramoyl-L-alanyl-D-glutamate--2,6-diaminopimelate ligase from Phocaeicola vulgatus (strain ATCC 8482 / DSM 1447 / JCM 5826 / CCUG 4940 / NBRC 14291 / NCTC 11154) (Bacteroides vulgatus).